The primary structure comprises 180 residues: Oligoribonuclease (180 aa).

The region spanning 7–170 (LIWIDLEMTG…DDIRESIAEL (164 aa)) is the Exonuclease domain. Residue Y128 is part of the active site.

The protein belongs to the oligoribonuclease family.

The protein resides in the cytoplasm. In terms of biological role, 3'-to-5' exoribonuclease specific for small oligoribonucleotides. The protein is Oligoribonuclease of Ectopseudomonas mendocina (strain ymp) (Pseudomonas mendocina).